The primary structure comprises 382 residues: GDP-mannose-dependent alpha-(1-6)-phosphatidylinositol monomannoside mannosyltransferase (382 aa).

Residues arginine 200, lysine 205, isoleucine 257, and glutamate 294 each coordinate GDP-alpha-D-mannose.

Belongs to the glycosyltransferase group 1 family. Glycosyltransferase 4 subfamily.

It carries out the reaction a 1,2-diacyl-sn-glycero-3-phospho-[alpha-D-mannopyranosyl-(1&lt;-&gt;6)-D-myo-inositol] + GDP-alpha-D-mannose = a 2,6-O-bis(alpha-D-mannopyranosyl)-1-phosphatidyl-1D-myo-inositol + GDP + H(+). The enzyme catalyses a 1,2-diacyl-sn-glycero-3-phospho-[alpha-D-6-acyl-mannopyranosyl-(1&lt;-&gt;6)-D-myo-inositol] + GDP-alpha-D-mannose = a 2-O-(alpha-D-mannosyl)-6-O-(6-O-acyl-alpha-D-mannosyl)-1-phosphatidyl-1D-myo-inositol + GDP + H(+). It functions in the pathway phospholipid metabolism; phosphatidylinositol metabolism. Functionally, involved in the biosynthesis of phosphatidyl-myo-inositol mannosides (PIM) which are early precursors in the biosynthesis of lipomannans (LM) and lipoarabinomannans (LAM). Catalyzes the addition of a mannosyl residue from GDP-D-mannose (GDP-Man) to the position 6 of a phosphatidyl-myo-inositol bearing an alpha-1,2-linked mannose residue (PIM1) to generate phosphatidyl-myo-inositol bearing alpha-1,2- and alpha-1,6-linked mannose residues (Ac1PIM2). PimB also catalyzes the addition of a mannosyl residue from GDP-Man to the position 6 of phosphatidyl-myo-inositol bearing an acylated alpha-1,2-linked mannose residue (Ac1PIM1) to generate monoacylated phosphatidyl-myo-inositol bearing alpha-1,2- and alpha-1,6-linked mannose residues (Ac1PIM2). The addition of the second mannosyl residue by PimB preferentially occurs before the acylation of the mannosyl residue transferred by PimA. Also able to transfer a mannosyl residue from GDP-Man to the position 6 of a phosphatidyl-myo-inositol (PI), but this reaction is very slow. This chain is GDP-mannose-dependent alpha-(1-6)-phosphatidylinositol monomannoside mannosyltransferase, found in Mycolicibacterium smegmatis (strain ATCC 700084 / mc(2)155) (Mycobacterium smegmatis).